A 328-amino-acid polypeptide reads, in one-letter code: MAKHVKVAVTGAAGQIGYALLFRLASGQAFGLDTTVDLHLLEIEPALPALKGVVMELEDCAFPLLRNMVVTSDPRVAFNDVNWALLVGAAPRKAGMERKDLLEKNGSIFAGQGKAINENAASDVRIFVVGNPCNTNCLIAMNNAPDIPKDRFYAMTRLDQNRAIGQLALKAGVDVPSVKNMIIWGNHSSTQYPDFYHATIDGKPATEVIRDKNWLLNDFIPVIQQRGAAVIKARGASSAASAANAALDSVWSLINTTPADDNYSVALCAQGRYGVDEGLIFSFPCRTENGVVSVIEEIEHNEFGQQKLKETLDELREERDAVEALGLI.

11–17 (GAAGQIG) lines the NAD(+) pocket. Substrate is bound by residues R92 and R98. Residues N105, Q112, and 129 to 131 (VGN) contribute to the NAD(+) site. The substrate site is built by N131 and R162. H187 functions as the Proton acceptor in the catalytic mechanism.

The protein belongs to the LDH/MDH superfamily. MDH type 2 family.

It carries out the reaction (S)-malate + NAD(+) = oxaloacetate + NADH + H(+). Catalyzes the reversible oxidation of malate to oxaloacetate. The sequence is that of Malate dehydrogenase from Coxiella burnetii (strain CbuG_Q212) (Coxiella burnetii (strain Q212)).